We begin with the raw amino-acid sequence, 932 residues long: Potassium voltage-gated channel subfamily KQT member 5 (932 aa).

Topologically, residues 1 to 125 (MPRHHAGGEE…YNVLERPRGW (125 aa)) are cytoplasmic. Serine 88 carries the post-translational modification Phosphoserine. The helical transmembrane segment at 126–146 (AFIYHAFVFLLVFGCLILSVF) threads the bilayer. The Extracellular portion of the chain corresponds to 147-156 (STIPEHTKLA). The helical transmembrane segment at 157–177 (SSCLLILEFVMIVVFGLEFII) threads the bilayer. Over 178–200 (RIWSAGCCCRYRGWQGRLRFARK) the chain is Cytoplasmic. A helical membrane pass occupies residues 201-221 (PFCVIDTIVLIASIAVVSAKT). Topologically, residues 222-229 (QGNIFATS) are extracellular. A helical; Voltage-sensor transmembrane segment spans residues 230-252 (ALRSLRFLQILRMVRMDRRGGTW). A 1,2-diacyl-sn-glycero-3-phospho-(1D-myo-inositol-4,5-bisphosphate)-binding residues include arginine 248 and lysine 264. The Cytoplasmic segment spans residues 253-266 (KLLGSVVYAHSKEL). Residues 267–287 (ITAWYIGFLVLIFSSFLVYLV) traverse the membrane as a helical segment. Residues 288 to 298 (EKDANKEFSTY) lie on the Extracellular side of the membrane. The segment at residues 299 to 319 (ADALWWGTITLTTIGYGDKTP) is an intramembrane region (pore-forming). The Extracellular segment spans residues 320-325 (LTWLGR). A helical membrane pass occupies residues 326–346 (LLSAGFALLGISFFALPAGIL). The Cytoplasmic portion of the chain corresponds to 347–932 (GSGFALKVQE…ALSLPHVKLK (586 aa)). Residue lysine 361 participates in a 1,2-diacyl-sn-glycero-3-phospho-(1D-myo-inositol-4,5-bisphosphate) binding. The interval 370–378 (AANLIQCVW) is interaction with CALM. The segment at 404–465 (SPTKKEQGEA…GSPTKVQKSW (62 aa)) is disordered. Residues 431–440 (RGQSIKSRQA) show a composition bias toward polar residues. Serine 447 carries the post-translational modification Phosphoserine. Residues 521-528 (VIRAIRIM) are interaction with CALM. The tract at residues 655–678 (SDYQSPVDSKDLSGSAQNSGCLSR) is disordered. Serine 831 bears the Phosphoserine mark. A compositionally biased stretch (acidic residues) spans 876–885 (VGPEETETDT). Residues 876–919 (VGPEETETDTFDAAPQPAREAAFASDSLRTGRSRSSQSICKAGE) form a disordered region. Residues 888–899 (AAPQPAREAAFA) are compositionally biased toward low complexity. Residues 902 to 914 (SLRTGRSRSSQSI) show a composition bias toward polar residues.

The protein belongs to the potassium channel family. KQT (TC 1.A.1.15) subfamily. Kv7.5/KCNQ5 sub-subfamily. Homotetramer; forms a functional homotetrameric channel resulting in the expression of a small M-current. Heterotetramer with KCNQ3; forms heterotetrameric M-channel responsible for the native M-current. Heterotetramer with KCNQ1; forms a functional voltage-gated potassium channel. Interacts (via C-terminus) with calmodulin/CALM1; forms a heterooctameric structure (with 4:4 KCNQ1:CALM stoichiometry); the interaction is calcium-independent, constitutive and participates in the channel function. Strongly expressed in brain and skeletal muscle. In brain, expressed in cerebral cortex, occipital pole, frontal lobe and temporal lobe. Lower levels in hippocampus and putamen. Low to undetectable levels in medulla, cerebellum and thalamus.

It is found in the cell membrane. It catalyses the reaction K(+)(in) = K(+)(out). Its activity is regulated as follows. Phosphatidylinositol-4,5-bisphosphate (PIP2) is essential to activate KCNQ5 channel by inducing the coupling of the voltage-sensing domain (VSD) and the pore-forming domain (PD). Calcium suppresses KCNQ5 channel current through calcium-bound CALM C-terminus. Therefore CALM acts as calcium sensor that controls channel activity. Activated by niflumic acid and the anticonvulsant retigabine. Inhibited by barium, linopirdine, XE991 and tetraethylammonium (as homomer). Insensitive to tetraethylammonium in KCNQ3-KCNQ5 heteromers. Pore-forming subunit of the voltage-gated potassium (Kv) channel broadly expressed in brain and involved in the regulation of neuronal excitability. Associates with KCNQ3/Kv7.3 pore-forming subunit to form a potassium channel which contributes to M-type current, a slowly activating and deactivating potassium conductance which plays a critical role in determining the subthreshold electrical excitability of neurons. Contributes, with other potassium channels, to the molecular diversity of a heterogeneous population of M-channels, varying in kinetic and pharmacological properties, which underlie this physiologically important current. Also forms a functional channel with KCNQ1/Kv7.1 subunit that may contribute to vasoconstriction and hypertension. Channel may be selectively permeable in vitro to other cations besides potassium, in decreasing order of affinity K(+) = Rb(+) &gt; Cs(+) &gt; Na(+). Similar to the native M-channel, KCNQ3-KCNQ5 potassium channel is suppressed by activation of the muscarinic acetylcholine receptor CHRM1. The polypeptide is Potassium voltage-gated channel subfamily KQT member 5 (Homo sapiens (Human)).